A 257-amino-acid chain; its full sequence is Snake venom serine protease 2C (257 aa).

The first 18 residues, M1–A18, serve as a signal peptide directing secretion. Residues Q19 to L24 constitute a propeptide that is removed on maturation. A Peptidase S1 domain is found at V25–A248. Cystine bridges form between C31/C162, C49/C65, C97/C255, C141/C209, C173/C188, and C199/C224. Residues H64 and D109 each act as charge relay system in the active site. Residues N116, N120, and N121 are each glycosylated (N-linked (GlcNAc...) asparagine). Residue S203 is the Charge relay system of the active site.

It belongs to the peptidase S1 family. Snake venom subfamily. Monomer. As to expression, expressed by the venom gland.

It localises to the secreted. Functionally, snake venom serine protease that may act in the hemostasis system of the prey. The chain is Snake venom serine protease 2C (TLG2C) from Craspedocephalus gramineus (Bamboo pit viper).